A 105-amino-acid polypeptide reads, in one-letter code: Class I hydrophobin 1 (105 aa).

A signal peptide spans 1-18 (MAFIKSLLIASVAAVAFA). Cystine bridges form between Cys42–Cys83, Cys50–Cys76, Cys51–Cys62, and Cys84–Cys100.

Belongs to the fungal hydrophobin family. In terms of assembly, self-assembles to form functional amyloid fibrils called rodlets. Self-assembly into fibrillar rodlets occurs spontaneously at hydrophobic:hydrophilic interfaces and the rodlets further associate laterally to form amphipathic monolayers.

The protein resides in the secreted. The protein localises to the cell wall. Aerial growth, conidiation, and dispersal of filamentous fungi in the environment rely upon a capability of their secreting small amphipathic proteins called hydrophobins (HPBs) with low sequence identity. Class I can self-assemble into an outermost layer of rodlet bundles on aerial cell surfaces, conferring cellular hydrophobicity that supports fungal growth, development and dispersal; whereas Class II form highly ordered films at water-air interfaces through intermolecular interactions but contribute nothing to the rodlet structure. The protein is Class I hydrophobin 1 of Davidiella tassiana (Mycosphaerella tassiana).